We begin with the raw amino-acid sequence, 188 residues long: Small ribosomal subunit protein eS8 (188 aa).

Residues 1–34 (MGISRDSRHKRRLTGGRYPVHKKKRKYELGRPSS) are disordered. Residues 7-26 (SRHKRRLTGGRYPVHKKKRK) show a composition bias toward basic residues.

This sequence belongs to the eukaryotic ribosomal protein eS8 family.

This is Small ribosomal subunit protein eS8 (RPS8) from Theileria parva (East coast fever infection agent).